The following is a 296-amino-acid chain: Bifunctional protein FolD 1 (296 aa).

NADP(+)-binding positions include 167 to 169 (GCG) and Ile-235.

This sequence belongs to the tetrahydrofolate dehydrogenase/cyclohydrolase family. In terms of assembly, homodimer.

The catalysed reaction is (6R)-5,10-methylene-5,6,7,8-tetrahydrofolate + NADP(+) = (6R)-5,10-methenyltetrahydrofolate + NADPH. The enzyme catalyses (6R)-5,10-methenyltetrahydrofolate + H2O = (6R)-10-formyltetrahydrofolate + H(+). It functions in the pathway one-carbon metabolism; tetrahydrofolate interconversion. Its function is as follows. Catalyzes the oxidation of 5,10-methylenetetrahydrofolate to 5,10-methenyltetrahydrofolate and then the hydrolysis of 5,10-methenyltetrahydrofolate to 10-formyltetrahydrofolate. The polypeptide is Bifunctional protein FolD 1 (Nocardioides sp. (strain ATCC BAA-499 / JS614)).